Consider the following 66-residue polypeptide: Cold shock-like protein CspD (66 aa).

The CSD domain occupies 4–63 (GKVKWFNGEKGFGFIEVEGGEDVFVHFSAIQGDGFKTLEEGQEVSFEIVDGNRGPQAANV).

Homodimer.

Its subcellular location is the cytoplasm. This chain is Cold shock-like protein CspD (cspD), found in Bacillus cereus.